Consider the following 278-residue polypeptide: Large ribosomal subunit protein uL2 (278 aa).

Disordered stretches follow at residues 26–57 (RSTPEKSLVRPLHSKGGRNNAGRVTVRHQGGG) and 225–278 (VMNP…NKKR). Residues 258-278 (RSPKKASNKYIVRRRKTNKKR) are compositionally biased toward basic residues.

This sequence belongs to the universal ribosomal protein uL2 family. Part of the 50S ribosomal subunit. Forms a bridge to the 30S subunit in the 70S ribosome.

Functionally, one of the primary rRNA binding proteins. Required for association of the 30S and 50S subunits to form the 70S ribosome, for tRNA binding and peptide bond formation. It has been suggested to have peptidyltransferase activity; this is somewhat controversial. Makes several contacts with the 16S rRNA in the 70S ribosome. The protein is Large ribosomal subunit protein uL2 of Streptomyces coelicolor (strain ATCC BAA-471 / A3(2) / M145).